The sequence spans 119 residues: Large ribosomal subunit protein uL18 (119 aa).

Belongs to the universal ribosomal protein uL18 family. In terms of assembly, part of the 50S ribosomal subunit; part of the 5S rRNA/L5/L18/L25 subcomplex. Contacts the 5S and 23S rRNAs.

This is one of the proteins that bind and probably mediate the attachment of the 5S RNA into the large ribosomal subunit, where it forms part of the central protuberance. This Anaeromyxobacter sp. (strain Fw109-5) protein is Large ribosomal subunit protein uL18.